The primary structure comprises 122 residues: Large ribosomal subunit protein uL14 (122 aa).

This sequence belongs to the universal ribosomal protein uL14 family. Part of the 50S ribosomal subunit. Forms a cluster with proteins L3 and L19. In the 70S ribosome, L14 and L19 interact and together make contacts with the 16S rRNA in bridges B5 and B8.

Functionally, binds to 23S rRNA. Forms part of two intersubunit bridges in the 70S ribosome. This chain is Large ribosomal subunit protein uL14, found in Polynucleobacter asymbioticus (strain DSM 18221 / CIP 109841 / QLW-P1DMWA-1) (Polynucleobacter necessarius subsp. asymbioticus).